A 549-amino-acid polypeptide reads, in one-letter code: Glucose-6-phosphate isomerase (549 aa).

Catalysis depends on E355, which acts as the Proton donor. Active-site residues include H386 and K514.

This sequence belongs to the GPI family.

The protein resides in the cytoplasm. The enzyme catalyses alpha-D-glucose 6-phosphate = beta-D-fructose 6-phosphate. It participates in carbohydrate biosynthesis; gluconeogenesis. Its pathway is carbohydrate degradation; glycolysis; D-glyceraldehyde 3-phosphate and glycerone phosphate from D-glucose: step 2/4. Catalyzes the reversible isomerization of glucose-6-phosphate to fructose-6-phosphate. This is Glucose-6-phosphate isomerase from Salmonella schwarzengrund (strain CVM19633).